The chain runs to 431 residues: UDP-N-acetylglucosamine--N-acetylmuramyl-(pentapeptide) pyrophosphoryl-undecaprenol N-acetylglucosamine transferase (431 aa).

UDP-N-acetyl-alpha-D-glucosamine is bound by residues Thr-29–Gly-31, Asn-141, Arg-177, Ser-205, Ile-258, and Gln-303. Residues Ala-370–Pro-431 are disordered. The span at Lys-395–Leu-420 shows a compositional bias: polar residues.

This sequence belongs to the glycosyltransferase 28 family. MurG subfamily.

It is found in the cell inner membrane. It carries out the reaction di-trans,octa-cis-undecaprenyl diphospho-N-acetyl-alpha-D-muramoyl-L-alanyl-D-glutamyl-meso-2,6-diaminopimeloyl-D-alanyl-D-alanine + UDP-N-acetyl-alpha-D-glucosamine = di-trans,octa-cis-undecaprenyl diphospho-[N-acetyl-alpha-D-glucosaminyl-(1-&gt;4)]-N-acetyl-alpha-D-muramoyl-L-alanyl-D-glutamyl-meso-2,6-diaminopimeloyl-D-alanyl-D-alanine + UDP + H(+). The protein operates within cell wall biogenesis; peptidoglycan biosynthesis. Its function is as follows. Cell wall formation. Catalyzes the transfer of a GlcNAc subunit on undecaprenyl-pyrophosphoryl-MurNAc-pentapeptide (lipid intermediate I) to form undecaprenyl-pyrophosphoryl-MurNAc-(pentapeptide)GlcNAc (lipid intermediate II). This chain is UDP-N-acetylglucosamine--N-acetylmuramyl-(pentapeptide) pyrophosphoryl-undecaprenol N-acetylglucosamine transferase, found in Xanthomonas euvesicatoria pv. vesicatoria (strain 85-10) (Xanthomonas campestris pv. vesicatoria).